Here is a 29-residue protein sequence, read N- to C-terminus: Cytochrome b6-f complex subunit 8 (29 aa).

The helical transmembrane segment at 3-23 (LITITWASVMVAFTFSLSLVV) threads the bilayer.

Belongs to the PetN family. The 4 large subunits of the cytochrome b6-f complex are cytochrome b6, subunit IV (17 kDa polypeptide, PetD), cytochrome f and the Rieske protein, while the 4 small subunits are PetG, PetL, PetM and PetN. The complex functions as a dimer.

The protein resides in the plastid. It localises to the chloroplast thylakoid membrane. Functionally, component of the cytochrome b6-f complex, which mediates electron transfer between photosystem II (PSII) and photosystem I (PSI), cyclic electron flow around PSI, and state transitions. The polypeptide is Cytochrome b6-f complex subunit 8 (Chaetosphaeridium globosum (Charophycean green alga)).